A 363-amino-acid polypeptide reads, in one-letter code: G-protein coupled receptor 4 (363 aa).

The Extracellular portion of the chain corresponds to 1-8; it reads MGNGTWEG. N3 carries N-linked (GlcNAc...) asparagine glycosylation. A helical transmembrane segment spans residues 9–45; it reads CHVDSRVDHLFPPSLYIFVIGVGLPTNCLALWAAYRQ. 2 cysteine pairs are disulfide-bonded: C9/C258 and C90/C168. Topologically, residues 46-49 are cytoplasmic; that stretch reads VRQR. Residues 50 to 80 form a helical membrane-spanning segment; the sequence is NELGVYLMNLSIADLLYICTLPLWVDYFLHH. The Extracellular segment spans residues 81 to 85; sequence DNWIH. The chain crosses the membrane as a helical span at residues 86–121; that stretch reads GPGSCKLFGFIFYTNIYISIAFLCCISVDRYLAVAH. Topologically, residues 122–129 are cytoplasmic; that stretch reads PLRFARLR. The helical transmembrane segment at 130–156 threads the bilayer; it reads RVKTAVAVSSVVWATELGANSVPLFHD. Over 157 to 172 the chain is Extracellular; that stretch reads ELFRDRYNHTFCFEKF. Positions 157–172 are extracellular loop 2 (ECL2); the sequence is ELFRDRYNHTFCFEKF. N164 is a glycosylation site (N-linked (GlcNAc...) asparagine). A helical membrane pass occupies residues 173-210; that stretch reads PMEGWVAWMNLYRVFVGFLFPWALMLLSYRGILRAVRG. The Cytoplasmic segment spans residues 211–214; it reads SVST. The helical transmembrane segment at 215 to 250 threads the bilayer; sequence ERQEKAKIKRLALSLIAIVLVCFAPYHVLLLSRSAV. Over 251 to 260 the chain is Extracellular; that stretch reads YLGHPWDCGF. Residues 261 to 289 form a helical membrane-spanning segment; the sequence is EERVFSAYHSSLAFTSLNCVADPILYCLV. Topologically, residues 290–363 are cytoplasmic; that stretch reads NEGARSDVAK…QLKMLPPPAP (74 aa). Positions 344-363 are disordered; the sequence is ASPPSQGDQVQLKMLPPPAP.

It belongs to the G-protein coupled receptor 1 family.

It is found in the cell membrane. Activated by a network of residues that connects an extracellular-facing cavity to Glu-145, a conserved charged residue buried in the transmembrane core of the receptor. Protonation likely drives conformational changes in extracellular loop 2 (ECL2), which stabilizes movement of transmembrane 3 (TM3) and a series of rearrangements that connect the extracellular-facing cavity to Glu-145, a residue only conserved in proton-sensing G-protein coupled receptors. Proton-sensing G-protein coupled receptor activated by extracellular pH, which is required to monitor pH changes and generate adaptive reactions. Activated by an optimal pH of 6.8-7.2. Ligand binding causes a conformation change that triggers signaling via guanine nucleotide-binding proteins (G proteins) and modulates the activity of downstream effectors, such as adenylate cyclase. GPR4 is mainly coupled to G(s) G proteins and mediates activation of adenylate cyclase activity. May also couple with G(q) and G(12)/G(13) G proteins. Acts as a key regulator of respiratory sensitivity to CO2/H(+) in brain retrotrapezoid nucleus neurons: acts by mediating detection of protons generated by the formation of carbonic acid in the blood, an important mechanism to impulse to breathe. Also acts as a regulator of acid secretion in the kidney collecting duct by maintaining acid-base homeostasis in the kidney. Acidosis-induced GPR4 activation increases paracellular gap formation and permeability of vascular endothelial cells, possibly through the G(12)/G(13)/Rho GTPase signaling pathway. This chain is G-protein coupled receptor 4 (GPR4), found in Sus scrofa (Pig).